A 471-amino-acid chain; its full sequence is UDP-N-acetylmuramate--L-alanine ligase (471 aa).

114–120 (GTHGKTT) serves as a coordination point for ATP.

The protein belongs to the MurCDEF family.

Its subcellular location is the cytoplasm. The catalysed reaction is UDP-N-acetyl-alpha-D-muramate + L-alanine + ATP = UDP-N-acetyl-alpha-D-muramoyl-L-alanine + ADP + phosphate + H(+). The protein operates within cell wall biogenesis; peptidoglycan biosynthesis. Cell wall formation. This chain is UDP-N-acetylmuramate--L-alanine ligase, found in Rhizobium etli (strain ATCC 51251 / DSM 11541 / JCM 21823 / NBRC 15573 / CFN 42).